The primary structure comprises 146 residues: MQFNISDIIKILPHSYPFLLVDRVIECDPSKSIKAIKNVTFNEPFFIGHFPNHPIMPGVLIVESLAQASAICILGKGSKSTMENKVVYLMSIENAKFRKPVTPGDTLILQADFKNARLSVCKFECFAYVGEEKVAEATILAMLQNI.

His-49 is an active-site residue.

Belongs to the thioester dehydratase family. FabZ subfamily.

It is found in the cytoplasm. The catalysed reaction is a (3R)-hydroxyacyl-[ACP] = a (2E)-enoyl-[ACP] + H2O. In terms of biological role, involved in unsaturated fatty acids biosynthesis. Catalyzes the dehydration of short chain beta-hydroxyacyl-ACPs and long chain saturated and unsaturated beta-hydroxyacyl-ACPs. This chain is 3-hydroxyacyl-[acyl-carrier-protein] dehydratase FabZ, found in Wolbachia sp. subsp. Brugia malayi (strain TRS).